A 369-amino-acid polypeptide reads, in one-letter code: Chorismate synthase (369 aa).

Residues R48 and R54 each contribute to the NADP(+) site. FMN contacts are provided by residues 125–127, 238–239, G278, 293–297, and R319; these read RSS, NA, and KPTSS.

The protein belongs to the chorismate synthase family. As to quaternary structure, homotetramer. Requires FMNH2 as cofactor.

The enzyme catalyses 5-O-(1-carboxyvinyl)-3-phosphoshikimate = chorismate + phosphate. It functions in the pathway metabolic intermediate biosynthesis; chorismate biosynthesis; chorismate from D-erythrose 4-phosphate and phosphoenolpyruvate: step 7/7. Its function is as follows. Catalyzes the anti-1,4-elimination of the C-3 phosphate and the C-6 proR hydrogen from 5-enolpyruvylshikimate-3-phosphate (EPSP) to yield chorismate, which is the branch point compound that serves as the starting substrate for the three terminal pathways of aromatic amino acid biosynthesis. This reaction introduces a second double bond into the aromatic ring system. The polypeptide is Chorismate synthase (Burkholderia pseudomallei (strain 1106a)).